The primary structure comprises 500 residues: UDP-N-acetylmuramoyl-L-alanyl-D-glutamate--2,6-diaminopimelate ligase (500 aa).

Residue Ser-32 participates in UDP-N-acetyl-alpha-D-muramoyl-L-alanyl-D-glutamate binding. 117–123 (GTNGKTT) provides a ligand contact to ATP. Residues 159–160 (TT), Ser-186, Gln-192, and Arg-194 each bind UDP-N-acetyl-alpha-D-muramoyl-L-alanyl-D-glutamate. Position 226 is an N6-carboxylysine (Lys-226). Meso-2,6-diaminopimelate is bound by residues Arg-395, 419-422 (DNPR), Gly-470, and Glu-474. The Meso-diaminopimelate recognition motif signature appears at 419 to 422 (DNPR).

It belongs to the MurCDEF family. MurE subfamily. The cofactor is Mg(2+). Post-translationally, carboxylation is probably crucial for Mg(2+) binding and, consequently, for the gamma-phosphate positioning of ATP.

The protein localises to the cytoplasm. The catalysed reaction is UDP-N-acetyl-alpha-D-muramoyl-L-alanyl-D-glutamate + meso-2,6-diaminopimelate + ATP = UDP-N-acetyl-alpha-D-muramoyl-L-alanyl-gamma-D-glutamyl-meso-2,6-diaminopimelate + ADP + phosphate + H(+). Its pathway is cell wall biogenesis; peptidoglycan biosynthesis. Its function is as follows. Catalyzes the addition of meso-diaminopimelic acid to the nucleotide precursor UDP-N-acetylmuramoyl-L-alanyl-D-glutamate (UMAG) in the biosynthesis of bacterial cell-wall peptidoglycan. The protein is UDP-N-acetylmuramoyl-L-alanyl-D-glutamate--2,6-diaminopimelate ligase of Parasynechococcus marenigrum (strain WH8102).